Reading from the N-terminus, the 395-residue chain is RNA ligase 1 (395 aa).

ATP-binding residues include tyrosine 48, arginine 65, and lysine 83. Catalysis depends on lysine 113, which acts as the N6-AMP-lysine intermediate. Glutamate 173, lysine 255, and lysine 257 together coordinate ATP. Aspartate 285 contacts Mg(2+).

Mg(2+) serves as cofactor. Requires Mn(2+) as cofactor.

The enzyme catalyses ATP + (ribonucleotide)n-3'-hydroxyl + 5'-phospho-(ribonucleotide)m = (ribonucleotide)n+m + AMP + diphosphate.. Functionally, RNA ligase that ligates single-stranded nucleic acids in an ATP-dependent manner. Catalyzes both inter- and intra-molecular single-stranded DNA (ssDNA) ligation to &gt;50% completion in a matter of hours at an elevated temperature, although favoring intra-molecular ligation on RNA and single-stranded DNA substrates. Is able to catalyze the adenylation reaction of ssDNA 3'-terminal phosphate (ssDNA 3'p) to 3'-adenylated DNA (ssDNA 3'pp5'A). Does not have significant 3'-adenylation activity with a 3'-phosphorylated nicked dsDNA substrate. This chain is RNA ligase 1, found in Thermus scotoductus.